A 141-amino-acid chain; its full sequence is Nucleoside diphosphate kinase (141 aa).

6 residues coordinate ATP: lysine 11, phenylalanine 59, arginine 87, threonine 93, arginine 104, and asparagine 114. The Pros-phosphohistidine intermediate role is filled by histidine 117.

This sequence belongs to the NDK family. As to quaternary structure, homotetramer. It depends on Mg(2+) as a cofactor.

Its subcellular location is the cytoplasm. The enzyme catalyses a 2'-deoxyribonucleoside 5'-diphosphate + ATP = a 2'-deoxyribonucleoside 5'-triphosphate + ADP. The catalysed reaction is a ribonucleoside 5'-diphosphate + ATP = a ribonucleoside 5'-triphosphate + ADP. Its function is as follows. Major role in the synthesis of nucleoside triphosphates other than ATP. The ATP gamma phosphate is transferred to the NDP beta phosphate via a ping-pong mechanism, using a phosphorylated active-site intermediate. The protein is Nucleoside diphosphate kinase of Pseudomonas entomophila (strain L48).